The chain runs to 145 residues: Histone H2B.7 (145 aa).

The segment covering 1–30 (MAPKAEKKPAEKKPVEEKSKAEKAPAEKKP) has biased composition (basic and acidic residues). A disordered region spans residues 1-53 (MAPKAEKKPAEKKPVEEKSKAEKAPAEKKPKAGKKLPKEAGAGGDKKKKMKKK). A2 is subject to N,N,N-trimethylalanine; alternate. N,N-dimethylalanine; alternate is present on A2. A2 carries the N-methylalanine; alternate modification. K4 bears the N6-methyllysine; partial mark. An N6-acetyllysine mark is found at K7 and K12. Position 13 is an N6,N6-dimethyllysine (K13). N6-acetyllysine is present on residues K23, K28, and K34. N6-acetyllysine; partial is present on K35. A Glycyl lysine isopeptide (Lys-Gly) (interchain with G-Cter in ubiquitin) cross-link involves residue K141.

Belongs to the histone H2B family. The nucleosome is a histone octamer containing two molecules each of H2A, H2B, H3 and H4 assembled in one H3-H4 heterotetramer and two H2A-H2B heterodimers. The octamer wraps approximately 147 bp of DNA. Can be acetylated to form H2BK6ac, H2BK11ac, H2BK22ac, H2BK27ac H2BK33ac and H2BK34ac. Post-translationally, mono-, di- or trimethylated at the N-terminus to form H2BA1me1/2/3. H2BA1me2 and H2BA1me3 may be methylated and/or acetylated to form H2BA1me2K3me1, H2BA1me2K3me1K6ac, H2BA1me2K6ac H2BA1me3K6ac, H2BA1me3K6acK11ac and H2BA1me2K3me1K6acK11ac. In terms of processing, monoubiquitinated by BRE1 to form H2BK143ub1 and deubiquitinated by UBP26. Required for heterochromatic histone H3 di- and trimethylation at H3K4me. May give a specific tag for epigenetic transcriptional activation.

It localises to the nucleus. The protein resides in the chromosome. Core component of nucleosome. Nucleosomes wrap and compact DNA into chromatin, limiting DNA accessibility to the cellular machineries which require DNA as a template. Histones thereby play a central role in transcription regulation, DNA repair, DNA replication and chromosomal stability. DNA accessibility is regulated via a complex set of post-translational modifications of histones, also called histone code, and nucleosome remodeling. The polypeptide is Histone H2B.7 (Arabidopsis thaliana (Mouse-ear cress)).